The sequence spans 335 residues: Probable cytosolic iron-sulfur protein assembly protein Ciao1 (335 aa).

7 WD repeats span residues 12–51 (GHKG…WSTK), 57–96 (GHKR…FECN), 101–140 (GHEN…EFEC), 146–185 (PHTQ…NDWD), 192–231 (SHTS…NTAG), 250–289 (QHSR…KPDE), and 301–335 (AHDQ…KVTE).

It belongs to the WD repeat CIA1 family. In terms of processing, conjugated to URM1, a ubiquitin-like protein.

Its function is as follows. Essential component of the cytosolic iron-sulfur (Fe/S) protein assembly machinery. Required for the maturation of extramitochondrial Fe/S proteins. The chain is Probable cytosolic iron-sulfur protein assembly protein Ciao1 from Drosophila melanogaster (Fruit fly).